The primary structure comprises 283 residues: MYQSMDLDDIKGHSHIINEDAEFDKTDSDNTFALELQKIIQQETNGGKVQDDVLAEAIATVDVDLPYLSNVSSPGLVYGTNKQSEHPQSHGGKDSDLTVEHILGDLQSGTEDDKEFTDRLNRLLCAPDSLKRGFSGDMEIDIPSNKKRKSVYETLSPPESMSPLSDKNDAQQNRDLNTHKDFSAMKRKINSQRMLKQVPLPPKLTNEFTMTQVAEMKKRVINTHKLILNFNFLKDGYARSCEELSKTVVKLKDSEFDRARLVKENQDLKRMVLEMSKQLNEKQ.

The disordered stretch occupies residues 148 to 174; that stretch reads RKSVYETLSPPESMSPLSDKNDAQQNR. Over residues 157–174 the composition is skewed to polar residues; it reads PPESMSPLSDKNDAQQNR.

It localises to the cytoplasm. Its subcellular location is the nucleus. Its function is as follows. Involved in cation homeostasis and in the regulation of the cation stress signaling cascades. This Kluyveromyces lactis (strain ATCC 8585 / CBS 2359 / DSM 70799 / NBRC 1267 / NRRL Y-1140 / WM37) (Yeast) protein is Protein ATC1/LIC4 (ATC1).